A 391-amino-acid chain; its full sequence is Probable chaperonin-like protein PrmG (391 aa).

The disordered stretch occupies residues 153–191; that stretch reads TTRWSVRSSPPPSNTSARTASSPPRRATHSGCRSRSSTA. The span at 154–174 shows a compositional bias: polar residues; the sequence is TRWSVRSSPPPSNTSARTASS.

The protein belongs to the chaperonin (HSP60) family.

In terms of biological role, probably plays an essential role in the productive folding of PrmA and PrmC, and thus in the formation of the active PrmABCD complex. This chain is Probable chaperonin-like protein PrmG, found in Gordonia sp. (strain TY-5).